Here is a 312-residue protein sequence, read N- to C-terminus: Ribonuclease Z (312 aa).

Residues H62, H64, D66, H67, H144, D215, and H273 each contribute to the Zn(2+) site. Residue D66 is the Proton acceptor of the active site.

It belongs to the RNase Z family. As to quaternary structure, homodimer. The cofactor is Zn(2+).

The enzyme catalyses Endonucleolytic cleavage of RNA, removing extra 3' nucleotides from tRNA precursor, generating 3' termini of tRNAs. A 3'-hydroxy group is left at the tRNA terminus and a 5'-phosphoryl group is left at the trailer molecule.. Its function is as follows. Zinc phosphodiesterase, which displays some tRNA 3'-processing endonuclease activity. Probably involved in tRNA maturation, by removing a 3'-trailer from precursor tRNA. This is Ribonuclease Z from Prochlorococcus marinus (strain MIT 9301).